A 478-amino-acid polypeptide reads, in one-letter code: Pyruvate kinase (478 aa).

Arg-35 is a binding site for substrate. Asn-37, Ser-39, and Asp-69 together coordinate K(+). 37–40 (NMSH) provides a ligand contact to ATP. Arg-76 and Lys-157 together coordinate ATP. Glu-219 is a binding site for Mg(2+). 3 residues coordinate substrate: Gly-242, Asp-243, and Thr-275. Asp-243 serves as a coordination point for Mg(2+).

This sequence belongs to the pyruvate kinase family. As to quaternary structure, homotetramer. Requires Mg(2+) as cofactor. K(+) is required as a cofactor.

The catalysed reaction is pyruvate + ATP = phosphoenolpyruvate + ADP + H(+). It participates in carbohydrate degradation; glycolysis; pyruvate from D-glyceraldehyde 3-phosphate: step 5/5. The chain is Pyruvate kinase (pyk) from Methylorubrum extorquens (strain ATCC 14718 / DSM 1338 / JCM 2805 / NCIMB 9133 / AM1) (Methylobacterium extorquens).